A 455-amino-acid polypeptide reads, in one-letter code: La-related protein 6C (455 aa).

Over residues 1 to 20 the composition is skewed to basic and acidic residues; the sequence is MAQMQREEVESVTTEKKRLD. The tract at residues 1 to 29 is disordered; the sequence is MAQMQREEVESVTTEKKRLDGGGGSSGAQ. One can recognise an HTH La-type RNA-binding domain in the interval 138–229; sequence NLLSDDLRLK…KRTSQFTDRD (92 aa). Positions 236-324 constitute an RRM domain; the sequence is RTVVAENLPD…KGLRVRLLLR (89 aa). Disordered stretches follow at residues 348-396 and 414-455; these read SYES…YAVG and SLGS…PNNL.

The protein resides in the nucleus. In terms of biological role, transcriptional regulator. This chain is La-related protein 6C (LARP6C), found in Arabidopsis thaliana (Mouse-ear cress).